The following is a 77-amino-acid chain: UPF0401 protein ECP_3010 (77 aa).

This sequence belongs to the UPF0401 family.

The protein is UPF0401 protein ECP_3010 of Escherichia coli O6:K15:H31 (strain 536 / UPEC).